A 489-amino-acid polypeptide reads, in one-letter code: WRKY transcription factor 72B (489 aa).

Disordered stretches follow at residues 1 to 100 (MENK…EMRE), 131 to 159 (QKETDQKSSSTTVNTSTTHHDHESDQEAD), and 234 to 267 (DENEETSNKNLKTMRNNGDGDDVSQQNPTKRARV). Basic and acidic residues-rich tracts occupy residues 32-52 (GRKEREDDKSKPSSPHHKDYM) and 83-100 (THKEQDDQLASAKDEMRE). The stretch at 84–132 (HKEQDDQLASAKDEMREVMEENQRLRMHLDRMMKEYRNLQNQFHDIVQK) forms a coiled coil. A compositionally biased stretch (low complexity) spans 138-147 (SSSTTVNTST). A DNA-binding region (WRKY) is located at residues 273-339 (CDAPTMNDGC…YEGTHNHTLP (67 aa)). Disordered stretches follow at residues 356-381 (LLSGSSNSSDPNPQVTATTTTTPTTT) and 427-454 (TSTSSSSPSSLSHLNRMTQNFPPRYNYN). 2 stretches are compositionally biased toward low complexity: residues 371-381 (TATTTTTPTTT) and 427-438 (TSTSSSSPSSLS).

The protein belongs to the WRKY group II-b family.

Its subcellular location is the nucleus. In terms of biological role, in association with WRKY72A, contributes to basal defense against root-knot nematodes (RKNs) and potato aphids, as well as Mi-1-mediated gene-for-gene resistance to these pests. Both WRKY72A and WRKY72B are not required for gene-for-gene resistance mediated by Pto, another tomato R gene. The sequence is that of WRKY transcription factor 72B from Solanum lycopersicum (Tomato).